Reading from the N-terminus, the 500-residue chain is 4-aminobutyrate aminotransferase, mitochondrial (500 aa).

The transit peptide at 1–27 (MAFLLTTRRLVCSSQKNLHLFTPGSRY) directs the protein to the mitochondrion. Position 163 (cysteine 163) interacts with [2Fe-2S] cluster. Residue 164–165 (GS) coordinates pyridoxal 5'-phosphate. Cysteine 166 serves as a coordination point for [2Fe-2S] cluster. Residue arginine 220 coordinates substrate. The residue at position 231 (lysine 231) is an N6-succinyllysine. Lysine 252 carries the N6-acetyllysine; alternate modification. Lysine 252 is modified (N6-succinyllysine; alternate). An N6-acetyllysine mark is found at lysine 279 and lysine 318. N6-(pyridoxal phosphate)lysine is present on lysine 357. Threonine 381 is a pyridoxal 5'-phosphate binding site. Lysine 413 is subject to N6-acetyllysine; alternate. Lysine 413 is subject to N6-succinyllysine; alternate. Lysine 452 and lysine 470 each carry N6-acetyllysine.

It belongs to the class-III pyridoxal-phosphate-dependent aminotransferase family. Homodimer; disulfide-linked. The cofactor is pyridoxal 5'-phosphate. [2Fe-2S] cluster serves as cofactor.

The protein resides in the mitochondrion matrix. The enzyme catalyses 4-aminobutanoate + 2-oxoglutarate = succinate semialdehyde + L-glutamate. It catalyses the reaction (S)-3-amino-2-methylpropanoate + 2-oxoglutarate = 2-methyl-3-oxopropanoate + L-glutamate. In terms of biological role, catalyzes the conversion of gamma-aminobutyrate and L-beta-aminoisobutyrate to succinate semialdehyde and methylmalonate semialdehyde, respectively. Can also convert delta-aminovalerate and beta-alanine. The chain is 4-aminobutyrate aminotransferase, mitochondrial from Rattus norvegicus (Rat).